Consider the following 298-residue polypeptide: Acetylglutamate kinase (298 aa).

Residues 69-70, R91, and N196 contribute to the substrate site; that span reads GG.

The protein belongs to the acetylglutamate kinase family. ArgB subfamily.

Its subcellular location is the cytoplasm. The enzyme catalyses N-acetyl-L-glutamate + ATP = N-acetyl-L-glutamyl 5-phosphate + ADP. The protein operates within amino-acid biosynthesis; L-arginine biosynthesis; N(2)-acetyl-L-ornithine from L-glutamate: step 2/4. Catalyzes the ATP-dependent phosphorylation of N-acetyl-L-glutamate. This chain is Acetylglutamate kinase, found in Rhodopseudomonas palustris (strain BisB18).